Reading from the N-terminus, the 402-residue chain is Imidazolonepropionase (402 aa).

Residues His69 and His71 each contribute to the Fe(3+) site. Zn(2+)-binding residues include His69 and His71. Residues Arg78, Tyr141, and His174 each coordinate 4-imidazolone-5-propanoate. Tyr141 is a binding site for N-formimidoyl-L-glutamate. His239 serves as a coordination point for Fe(3+). His239 provides a ligand contact to Zn(2+). Gln242 lines the 4-imidazolone-5-propanoate pocket. Asp314 contacts Fe(3+). Zn(2+) is bound at residue Asp314. The N-formimidoyl-L-glutamate site is built by Asn316 and Gly318. Position 319 (Thr319) interacts with 4-imidazolone-5-propanoate.

The protein belongs to the metallo-dependent hydrolases superfamily. HutI family. The cofactor is Zn(2+). Requires Fe(3+) as cofactor.

Its subcellular location is the cytoplasm. The catalysed reaction is 4-imidazolone-5-propanoate + H2O = N-formimidoyl-L-glutamate. It functions in the pathway amino-acid degradation; L-histidine degradation into L-glutamate; N-formimidoyl-L-glutamate from L-histidine: step 3/3. Catalyzes the hydrolytic cleavage of the carbon-nitrogen bond in imidazolone-5-propanoate to yield N-formimidoyl-L-glutamate. It is the third step in the universal histidine degradation pathway. This Maricaulis maris (strain MCS10) (Caulobacter maris) protein is Imidazolonepropionase.